We begin with the raw amino-acid sequence, 88 residues long: Small ribosomal subunit protein uS15 (88 aa).

Residues 1-12 (MITQEEQQKIID) are compositionally biased toward basic and acidic residues. Residues 1–24 (MITQEEQQKIIDRFGNGPNDTGTP) form a disordered region.

It belongs to the universal ribosomal protein uS15 family. As to quaternary structure, part of the 30S ribosomal subunit. Forms a bridge to the 50S subunit in the 70S ribosome, contacting the 23S rRNA.

In terms of biological role, one of the primary rRNA binding proteins, it binds directly to 16S rRNA where it helps nucleate assembly of the platform of the 30S subunit by binding and bridging several RNA helices of the 16S rRNA. Functionally, forms an intersubunit bridge (bridge B4) with the 23S rRNA of the 50S subunit in the ribosome. The sequence is that of Small ribosomal subunit protein uS15 from Salinibacter ruber (strain DSM 13855 / M31).